A 905-amino-acid polypeptide reads, in one-letter code: Heme/hemopexin-binding protein (905 aa).

Residues 1–21 (MYKLNVISLIILTTYTGATYA) form the signal peptide.

Its subcellular location is the secreted. In terms of biological role, binds heme/hemopexin complexes. This Haemophilus influenzae (strain ATCC 51907 / DSM 11121 / KW20 / Rd) protein is Heme/hemopexin-binding protein (hxuA).